We begin with the raw amino-acid sequence, 744 residues long: Tripartite motif-containing protein 2 (744 aa).

Serine 10 bears the Phosphoserine mark. The segment at 23-64 (CSICLERYKNPKVLPCLHTFCERCLQNYIPAHSLTLSCPVCR) adopts an RING-type zinc-finger fold. A B box-type zinc finger spans residues 113–154 (GKPLSCPNHDGNVMEFYCQSCETAMCRECTEGEHAEHPTVPL). Positions 118, 121, 141, and 146 each coordinate Zn(2+). A Filamin repeat occupies 320-421 (TTNAVASETV…IRGSPFKLKV (102 aa)). Phosphothreonine is present on threonine 371. A phosphoserine mark is found at serine 375, serine 424, and serine 428. Residues 432–462 (EGVKRRVKSPGSGHVKQKAVKRPASMYSTGK) are disordered. 6 NHL repeats span residues 473-516 (IFRV…FSND), 520-563 (KSRF…FSSD), 564-605 (GKFK…FQPN), 609-652 (VTRF…FNQE), 656-699 (MLKF…FDGS), and 700-743 (GSFL…YRYL).

This sequence belongs to the TRIM/RBCC family. In terms of assembly, forms homooligomers. Interacts with TRIM3; this interaction reduces TRIM2 activity. Interacts with myosin V; myosin V may not be a substrate for ubiquitination. Interacts with NEFL. Interacts with phosphorylated BCL2L11. Interacts with SIRPA. In terms of processing, RING-type zinc finger-dependent and UBE2D1-dependent autoubiquitination.

It localises to the cytoplasm. The catalysed reaction is S-ubiquitinyl-[E2 ubiquitin-conjugating enzyme]-L-cysteine + [acceptor protein]-L-lysine = [E2 ubiquitin-conjugating enzyme]-L-cysteine + N(6)-ubiquitinyl-[acceptor protein]-L-lysine.. The protein operates within protein modification; protein ubiquitination. Its function is as follows. UBE2D1-dependent E3 ubiquitin-protein ligase that mediates the ubiquitination of NEFL and of phosphorylated BCL2L11. Plays a neuroprotective function. May play a role in neuronal rapid ischemic tolerance. Plays a role in antiviral immunity and limits New World arenavirus infection independently of its ubiquitin ligase activity. The sequence is that of Tripartite motif-containing protein 2 (TRIM2) from Callithrix jacchus (White-tufted-ear marmoset).